We begin with the raw amino-acid sequence, 58 residues long: Metallothionein (58 aa).

The beta stretch occupies residues 1-29 (MPGPCCNDVCECAAGGCKTGCVCTSCRCS). Cysteine 5, cysteine 6, cysteine 10, cysteine 12, cysteine 17, cysteine 21, cysteine 23, cysteine 26, cysteine 28, cysteine 31, cysteine 34, cysteine 38, cysteine 40, cysteine 46, cysteine 50, cysteine 54, cysteine 56, and cysteine 57 together coordinate a divalent metal cation. The interval 30-58 (PCDKCTSGCKCPSKEECAKTCSKPCECCP) is alpha.

Metallothioneins have a high content of cysteine residues that bind various heavy metals. Class I MTS in crustacea are involved in the sequestration of elevated levels of heavy-metal ions. This chain is Metallothionein, found in Astacus astacus (Noble crayfish).